We begin with the raw amino-acid sequence, 379 residues long: Neutral protease 2 homolog TRV_03208 (379 aa).

Positions 1–19 are cleaved as a signal peptide; the sequence is MKFFTALAAVGALLAPALA. The propeptide occupies 20 to 187; that stretch reads LPTPASEEAS…DYFSKSLDKR (168 aa). 2 cysteine pairs are disulfide-bonded: Cys193–Cys263 and Cys270–Cys288. The N-linked (GlcNAc...) asparagine glycan is linked to Asn221. A Zn(2+)-binding site is contributed by His312. Residue Glu313 is part of the active site. Residues His316 and Asp327 each contribute to the Zn(2+) site.

This sequence belongs to the peptidase M35 family. The cofactor is Zn(2+).

The protein resides in the secreted. It carries out the reaction Preferential cleavage of bonds with hydrophobic residues in P1'. Also 3-Asn-|-Gln-4 and 8-Gly-|-Ser-9 bonds in insulin B chain.. In terms of biological role, secreted metalloproteinase that allows assimilation of proteinaceous substrates. Shows high activities on basic nuclear substrates such as histone and protamine. May be involved in virulence. In Trichophyton verrucosum (strain HKI 0517), this protein is Neutral protease 2 homolog TRV_03208.